A 337-amino-acid polypeptide reads, in one-letter code: Large ribosomal subunit protein uL3 (337 aa).

The tract at residues 1–26 (MGHAHAPRRGSLGYSPRVRARSQKPK) is disordered.

The protein belongs to the universal ribosomal protein uL3 family. Part of the 50S ribosomal subunit. Forms a cluster with proteins L14 and L24e.

In terms of biological role, one of the primary rRNA binding proteins, it binds directly near the 3'-end of the 23S rRNA, where it nucleates assembly of the 50S subunit. In Methanocella arvoryzae (strain DSM 22066 / NBRC 105507 / MRE50), this protein is Large ribosomal subunit protein uL3.